Reading from the N-terminus, the 102-residue chain is uncharacterized protein (102 aa).

Residues cysteine 10, cysteine 16, and cysteine 55 each coordinate [3Fe-4S] cluster. The segment at aspartate 66–valine 102 is disordered. Residues alanine 82–arginine 93 are compositionally biased toward basic and acidic residues.

[3Fe-4S] cluster serves as cofactor.

Its function is as follows. Electron transport protein for the cytochrome systems. This is an uncharacterized protein from Sinorhizobium fredii (strain NBRC 101917 / NGR234).